The primary structure comprises 377 residues: MFAFEGFKWEIVEIFDWKGLKKLQTTFQNYLLILSMIVSIAVVVAIKNYDSLWSLITNSSDSSNFLTVGSILATISALLVSISWVIIQTSSDRLSNILMWIWVRDVRFLTFVVISFTTVFLFILISLTHVQLHVIDYGIIYYVIMLNFLMYALYIKAFANVINPKYAVDLILRDKDIGDKSGGYGDLTDAESRLFAVYEIIEKRIKVGDVYAVIKCLNMINKNFNKYWMFIKDEKREKYLRDFLRILSKLRVEYRKNCLNRKNKPYSKKGLEAFKKTEFIVSFYKTIEEKIKTRDINSINKFLSETYNNISNYEMFNDKTYLEIFVHHLKELLEKYEKEKNENKLDEEIFNELKDELEKLINKCNNKLRELESQNNN.

Helical transmembrane passes span 26-46, 67-87, 108-128, and 135-155; these read TFQN…VVAI, TVGS…WVII, FLTF…ISLT, and IDYG…ALYI.

It is found in the cell membrane. This is an uncharacterized protein from Methanocaldococcus jannaschii (strain ATCC 43067 / DSM 2661 / JAL-1 / JCM 10045 / NBRC 100440) (Methanococcus jannaschii).